The primary structure comprises 100 residues: Ferredoxin-2 (100 aa).

Positions 4 to 97 (YKVTLINEEE…DCTIMTHQES (94 aa)) constitute a 2Fe-2S ferredoxin-type domain. [2Fe-2S] cluster contacts are provided by cysteine 42, cysteine 47, cysteine 50, and cysteine 81.

The protein belongs to the 2Fe2S plant-type ferredoxin family. [2Fe-2S] cluster serves as cofactor.

Ferredoxins are iron-sulfur proteins that transfer electrons in a wide variety of metabolic reactions. This is Ferredoxin-2 from Aphanothece sacrum.